The primary structure comprises 628 residues: Monoterpene synthase like 1, chloroplastic (628 aa).

3 residues coordinate Mg(2+): Asp-379, Asp-383, and Asp-531. Residues 379-383 (DDIYD) carry the DDXXD motif motif.

This sequence belongs to the terpene synthase family. Tpsd subfamily. The cofactor is Mg(2+). Mn(2+) serves as cofactor.

The protein resides in the plastid. Its subcellular location is the chloroplast. It functions in the pathway terpene metabolism; oleoresin biosynthesis. Its pathway is secondary metabolite biosynthesis; terpenoid biosynthesis. In terms of biological role, monoterpene synthase (TPS) involved in the biosynthesis of monoterpene natural products included in conifer oleoresin secretions and volatile emissions; these compounds contribute to biotic and abiotic stress defense against herbivores and pathogens. This Pinus banksiana (Jack pine) protein is Monoterpene synthase like 1, chloroplastic.